We begin with the raw amino-acid sequence, 415 residues long: uncharacterized protein (415 aa).

The 52-residue stretch at 1–52 (MQDLTINAIGAQGDGLARTADGKPAFVPLTLPGEVVRAKMDGARGEVVEILA) folds into the TRAM domain. 4 residues coordinate [4Fe-4S] cluster: Cys62, Cys68, Cys71, and Cys147. Positions 252, 279, 299, and 347 each coordinate S-adenosyl-L-methionine. Residue Cys373 is the Nucleophile of the active site.

It belongs to the class I-like SAM-binding methyltransferase superfamily. RNA M5U methyltransferase family.

This is an uncharacterized protein from Caulobacter vibrioides (strain ATCC 19089 / CIP 103742 / CB 15) (Caulobacter crescentus).